We begin with the raw amino-acid sequence, 220 residues long: Large ribosomal subunit protein uL3 (220 aa).

The segment at 137–159 is disordered; sequence GASHGAHKNHRKPGSIGGASTPS.

This sequence belongs to the universal ribosomal protein uL3 family. As to quaternary structure, part of the 50S ribosomal subunit. Forms a cluster with proteins L14 and L19.

Functionally, one of the primary rRNA binding proteins, it binds directly near the 3'-end of the 23S rRNA, where it nucleates assembly of the 50S subunit. The sequence is that of Large ribosomal subunit protein uL3 from Renibacterium salmoninarum (strain ATCC 33209 / DSM 20767 / JCM 11484 / NBRC 15589 / NCIMB 2235).